We begin with the raw amino-acid sequence, 266 residues long: Protein crossbronx-like (266 aa).

The region spanning 15-178 (KQGYHILAEY…VQEQAILSRN (164 aa)) is the UBC core domain. The segment at 226 to 266 (SEYLGHIDSSRQMDEEETNQLEKLHRGRIPEPQREEAEVSL) is disordered. Over residues 245–266 (QLEKLHRGRIPEPQREEAEVSL) the composition is skewed to basic and acidic residues.

Belongs to the ubiquitin-conjugating enzyme family. FTS subfamily.

In Drosophila sechellia (Fruit fly), this protein is Protein crossbronx-like.